A 111-amino-acid polypeptide reads, in one-letter code: Viscotoxin-A3 (111 aa).

An N-terminal signal peptide occupies residues 1–26; it reads MEVVRGSSLVLLVLLLGALLVSQVES. Cystine bridges form between C29–C66, C30–C58, and C42–C52. Positions 73 to 111 are cleaved as a propeptide — acidic domain; the sequence is FYCTLGCESSQCATNSNGDAEAVRCKTACSDLCQDVDDA.

This sequence belongs to the plant thionin (TC 1.C.44) family.

It localises to the secreted. Its function is as follows. Thionins are small plant proteins which are toxic to animal cells. They seem to exert their toxic effect at the level of the cell membrane. Their precise function is not known. The polypeptide is Viscotoxin-A3 (THI2.1) (Viscum album (European mistletoe)).